Consider the following 223-residue polypeptide: UPF0173 metal-dependent hydrolase TV0864 (223 aa).

The protein belongs to the UPF0173 family.

This Thermoplasma volcanium (strain ATCC 51530 / DSM 4299 / JCM 9571 / NBRC 15438 / GSS1) protein is UPF0173 metal-dependent hydrolase TV0864.